The following is a 1262-amino-acid chain: Clustered mitochondria protein homolog (1262 aa).

The disordered stretch occupies residues 1 to 47 (MTSGSELKAEVDAPVVNGKDELVHEEDNNDSGHSSINTPDASEDKQT). Residues 31 to 40 (SGHSSINTPD) show a composition bias toward polar residues. Residues 335-580 (AIELIEPFRV…RSMPPDVHYL (246 aa)) enclose the Clu domain.

Belongs to the CLU family.

It is found in the cytoplasm. Its function is as follows. mRNA-binding protein involved in proper cytoplasmic distribution of mitochondria. In Caenorhabditis briggsae, this protein is Clustered mitochondria protein homolog.